Consider the following 230-residue polypeptide: Probable methylthioribulose-1-phosphate dehydratase (230 aa).

Cysteine 87 is a binding site for substrate. 2 residues coordinate Zn(2+): histidine 105 and histidine 107. Catalysis depends on glutamate 129, which acts as the Proton donor/acceptor. Histidine 185 lines the Zn(2+) pocket.

This sequence belongs to the aldolase class II family. MtnB subfamily. It depends on Zn(2+) as a cofactor.

It localises to the cytoplasm. The catalysed reaction is 5-(methylsulfanyl)-D-ribulose 1-phosphate = 5-methylsulfanyl-2,3-dioxopentyl phosphate + H2O. The protein operates within amino-acid biosynthesis; L-methionine biosynthesis via salvage pathway; L-methionine from S-methyl-5-thio-alpha-D-ribose 1-phosphate: step 2/6. Catalyzes the dehydration of methylthioribulose-1-phosphate (MTRu-1-P) into 2,3-diketo-5-methylthiopentyl-1-phosphate (DK-MTP-1-P). The protein is Probable methylthioribulose-1-phosphate dehydratase of Drosophila virilis (Fruit fly).